We begin with the raw amino-acid sequence, 414 residues long: Acyltransferase MYCGRDRAFT_85486 (414 aa).

Positions 16 to 25 (DGTSTVTIRP) are enriched in polar residues. The tract at residues 16–47 (DGTSTVTIRPTQKAAPSEEPSQDTAPSKKDSN) is disordered. Residue His-329 participates in substrate binding. The active-site Proton acceptor is the Glu-367.

It belongs to the lysine N-acyltransferase mbtK family.

It participates in siderophore biosynthesis. Acyltransferase; part of the gene cluster 14 that mediates the biosynthesis of a ferrichrome A-like siderophore which may contribute to organismal virulence. The first step of siderophore biosynthesis is performed by the HMG-CoA synthase (HMGS) MYCGRDRAFT_54740 which catalyzes the generation of HMG-CoA and CoA using acetoacetyl-CoA and acetyl-CoA as substrates. The enoyl-CoA isomerase/hydratase MYCGRDRAFT_76805 then catalyzes the conversion of HMG-CoA to methylglutaconyl-CoA. The acyltransferase MYCGRDRAFT_85486 then fuses methylglutaconyl-CoA with hydroxyornithine to yield methylglutaconyl hydroxyornithine. Methylglutaconyl hydroxyornithine is then available for use by the nonribosomal peptide synthetase NRPS2 to generate the ferrichrome A-like siderophore. This chain is Acyltransferase MYCGRDRAFT_85486, found in Zymoseptoria tritici (strain CBS 115943 / IPO323) (Speckled leaf blotch fungus).